Reading from the N-terminus, the 51-residue chain is MIRLQHDKQKQMRYGTLQKRDTLTLCLLKLQLMEWRFDSAWKFGLGRLYLG.

A short protein whose stop codon overlaps with the start codon of downstream rpoE; a premature stop codon at position 12 results in decreased expression of ECF sigma factor RpoE, thus they are translationally coupled. In Escherichia coli (strain K12), this protein is rpoE leader peptide.